The following is a 96-amino-acid chain: UPF0235 protein Pfl01_5322 (96 aa).

Belongs to the UPF0235 family.

The chain is UPF0235 protein Pfl01_5322 from Pseudomonas fluorescens (strain Pf0-1).